A 97-amino-acid polypeptide reads, in one-letter code: Putative CC-type chemokine U83 (97 aa).

2 disulfide bridges follow: Cys32–Cys62 and Cys33–Cys76.

The protein belongs to the intercrine beta (chemokine CC) family. Highly divergent.

The polypeptide is Putative CC-type chemokine U83 (U83) (Homo sapiens (Human)).